A 38-amino-acid polypeptide reads, in one-letter code: Photosystem II reaction center protein L (38 aa).

The helical transmembrane segment at serine 17–phenylalanine 37 threads the bilayer.

It belongs to the PsbL family. In terms of assembly, PSII is composed of 1 copy each of membrane proteins PsbA, PsbB, PsbC, PsbD, PsbE, PsbF, PsbH, PsbI, PsbJ, PsbK, PsbL, PsbM, PsbT, PsbX, PsbY, PsbZ, Psb30/Ycf12, at least 3 peripheral proteins of the oxygen-evolving complex and a large number of cofactors. It forms dimeric complexes.

The protein resides in the plastid. The protein localises to the chloroplast thylakoid membrane. Its function is as follows. One of the components of the core complex of photosystem II (PSII). PSII is a light-driven water:plastoquinone oxidoreductase that uses light energy to abstract electrons from H(2)O, generating O(2) and a proton gradient subsequently used for ATP formation. It consists of a core antenna complex that captures photons, and an electron transfer chain that converts photonic excitation into a charge separation. This subunit is found at the monomer-monomer interface and is required for correct PSII assembly and/or dimerization. This chain is Photosystem II reaction center protein L, found in Tupiella akineta (Green alga).